The primary structure comprises 159 residues: uncharacterized protein (159 aa).

The span at 1–13 (MESRPSGRQHASE) shows a compositional bias: basic and acidic residues. The segment at 1–35 (MESRPSGRQHASEGDGDQSPTQCAGMRSSGRSDQP) is disordered.

This is an uncharacterized protein from Homo sapiens (Human).